Reading from the N-terminus, the 694-residue chain is Methionine--tRNA ligase (694 aa).

Positions 14-24 (PYANGPIHLGH) match the 'HIGH' region motif. C145, C148, C158, and C161 together coordinate Zn(2+). The 'KMSKS' region signature appears at 330 to 334 (KMSKS). K333 contacts ATP. The interval 558–579 (SLQATAGQPEPHSQVRHAEHQQ) is disordered. Residues 593–694 (DFAKVDLRIA…EGAQPGMKVK (102 aa)) enclose the tRNA-binding domain.

It belongs to the class-I aminoacyl-tRNA synthetase family. MetG type 1 subfamily. In terms of assembly, homodimer. Zn(2+) is required as a cofactor.

It localises to the cytoplasm. The enzyme catalyses tRNA(Met) + L-methionine + ATP = L-methionyl-tRNA(Met) + AMP + diphosphate. Is required not only for elongation of protein synthesis but also for the initiation of all mRNA translation through initiator tRNA(fMet) aminoacylation. This Methylococcus capsulatus (strain ATCC 33009 / NCIMB 11132 / Bath) protein is Methionine--tRNA ligase.